The primary structure comprises 484 residues: Myosin-binding protein H (484 aa).

Positions Met-1–Pro-78 are disordered. Phosphothreonine is present on residues Thr-2, Thr-6, and Thr-26. The segment covering Gln-41–Glu-71 has biased composition (low complexity). In terms of domain architecture, Fibronectin type-III 1 spans Ala-80–Ile-175. The Ig-like C2-type 1 domain occupies Pro-179 to Asp-267. Residues Pro-276 to Ala-371 enclose the Fibronectin type-III 2 domain. Positions Pro-389 to Lys-479 constitute an Ig-like C2-type 2 domain.

Belongs to the immunoglobulin superfamily. MyBP family. In terms of tissue distribution, skeletal muscle.

In terms of biological role, binds to myosin; probably involved in interaction with thick myofilaments in the A-band. The sequence is that of Myosin-binding protein H (Mybph) from Rattus norvegicus (Rat).